Reading from the N-terminus, the 602-residue chain is Fumarate reductase flavoprotein subunit (602 aa).

FAD is bound by residues 12 to 16, 36 to 38, 44 to 52, 156 to 158, 192 to 193, and D212; these read GAGGA, ISK, SHTVAAEGG, HFV, and AT. Tele-8alpha-FAD histidine is present on H45. Catalysis depends on residues H233 and R249. Residues 356 to 357, E380, and 391 to 397 contribute to the FAD site; these read HY and RLGSNSL. The segment at 581–602 is disordered; the sequence is YGGEADAADKAEAANKKEKANG. Residues 587–602 are compositionally biased toward basic and acidic residues; that stretch reads AADKAEAANKKEKANG.

The protein belongs to the FAD-dependent oxidoreductase 2 family. FRD/SDH subfamily. Part of an enzyme complex containing four subunits: a flavoprotein (FrdA), an iron-sulfur protein (FrdB), and two hydrophobic anchor proteins (FrdC and FrdD). Can be cross-linked to SdhE. Purified from membrane fractions associated with protoporphyrinogen IX dehydrogenase (hemG). FAD serves as cofactor.

The protein localises to the cell inner membrane. It carries out the reaction a quinone + succinate = fumarate + a quinol. The catalysed reaction is a menaquinone + succinate = a menaquinol + fumarate. With respect to regulation, inhibited by oxaloacetate, a substrate analog. Functionally, two distinct, membrane-bound, FAD-containing enzymes are responsible for the catalysis of fumarate and succinate interconversion; fumarate reductase is used during anaerobic growth, and succinate dehydrogenase is used during aerobic growth. The QFR enzyme complex binds 2 quinones in or near the membrane; 1 near the [3Fe-4S] cluster (QP is proximal to the [3Fe-4S] cluster, on the cytoplasmic side of the membrane) while QD (the distal cluster) is on the other side of the membrane. It is not clear if both of the quinol-binding sites are functionally relevant. The chain is Fumarate reductase flavoprotein subunit (frdA) from Escherichia coli (strain K12).